Reading from the N-terminus, the 79-residue chain is uncharacterized protein (79 aa).

This is an uncharacterized protein from Escherichia coli (Bacteriophage T4).